Reading from the N-terminus, the 197-residue chain is Putative methyltransferase Mtx subunit A (197 aa).

It belongs to the MtrA family. As to quaternary structure, may be part of a complex composed of 3 subunits; MtxA, MtxH and MtxX.

The sequence is that of Putative methyltransferase Mtx subunit A (mtxA) from Methanosarcina barkeri (strain Fusaro / DSM 804).